A 442-amino-acid polypeptide reads, in one-letter code: MITLKEALSKPKGELQEIKDELKKRAQEQSEINAYVALDESGEGVPVAIKDNIQVDGWEVTCASKILKGYIAPYDATVIQKLRANGLAPFGRTNMDEFAMGSTTETSCYGKTLNPKDTSRVPGGSSGGSAAAVAAGIAIAALGSDTGGSIRQPAAFCGVVGMKPTYGRVSRYGLAAYGSSLDQIGPMTQNVEDAAILYNIIAGSDAKDSTSARIECKPVVPDPKRKLKIGVVPNYVKDASGAIQKAYDKAIEALKQEGHEIIEISLMDAKYDIASYYITAMAEASTNLSRYDGVRYGYRAEAKNLKEMYLKTRSEGFGEEVKRRILLGTFVLSSGYYDAYYIKAQKARHIIKDEYNKVFEKVDLILSPVAPDVAFEFGAMKTPLEMYLSDVYTIGVNLAGLPAISLPVDEHEGLPVGLQLIGKAFDEQTVFDGAMSLENALK.

Residues K50 and S125 each act as charge relay system in the active site. Catalysis depends on S149, which acts as the Acyl-ester intermediate.

Belongs to the amidase family. GatA subfamily. In terms of assembly, heterotrimer of A, B and C subunits.

It carries out the reaction L-glutamyl-tRNA(Gln) + L-glutamine + ATP + H2O = L-glutaminyl-tRNA(Gln) + L-glutamate + ADP + phosphate + H(+). Functionally, allows the formation of correctly charged Gln-tRNA(Gln) through the transamidation of misacylated Glu-tRNA(Gln) in organisms which lack glutaminyl-tRNA synthetase. The reaction takes place in the presence of glutamine and ATP through an activated gamma-phospho-Glu-tRNA(Gln). The polypeptide is Glutamyl-tRNA(Gln) amidotransferase subunit A (Nitratiruptor sp. (strain SB155-2)).